We begin with the raw amino-acid sequence, 223 residues long: Sugar fermentation stimulation protein homolog (223 aa).

It belongs to the SfsA family.

The protein is Sugar fermentation stimulation protein homolog of Thermosipho melanesiensis (strain DSM 12029 / CIP 104789 / BI429).